A 488-amino-acid polypeptide reads, in one-letter code: Phenylalanine--tRNA ligase alpha subunit (488 aa).

Residues T315, 354 to 356 (QLD), F394, and F419 contribute to the L-phenylalanine site.

The protein belongs to the class-II aminoacyl-tRNA synthetase family. Phe-tRNA synthetase alpha subunit type 2 subfamily. As to quaternary structure, tetramer of two alpha and two beta subunits. Mg(2+) is required as a cofactor.

The protein localises to the cytoplasm. The enzyme catalyses tRNA(Phe) + L-phenylalanine + ATP = L-phenylalanyl-tRNA(Phe) + AMP + diphosphate + H(+). The sequence is that of Phenylalanine--tRNA ligase alpha subunit from Pyrobaculum calidifontis (strain DSM 21063 / JCM 11548 / VA1).